The following is a 750-amino-acid chain: Photosystem I P700 chlorophyll a apoprotein A1 (750 aa).

The next 8 membrane-spanning stretches (helical) occupy residues 70–93 (VFSA…FHGA), 156–179 (LYCT…FHYH), 195–219 (LNHH…HVSL), 291–309 (TAHH…GHMY), 346–369 (WHAQ…HHMY), 385–411 (LSLF…IFMV), 433–455 (AIIS…LYIH), and 531–549 (FLVH…LILL). Positions 573 and 582 each coordinate [4Fe-4S] cluster. A run of 2 helical transmembrane segments spans residues 589–610 (HVFL…HFSW) and 664–686 (LSAY…MFLF). Position 675 (His675) interacts with chlorophyll a'. Residues Met683 and Tyr691 each coordinate chlorophyll a. Trp692 is a binding site for phylloquinone. The helical transmembrane segment at 724-744 (AVGVTHYLLGGIATTWAFFLA) threads the bilayer.

This sequence belongs to the PsaA/PsaB family. The PsaA/B heterodimer binds the P700 chlorophyll special pair and subsequent electron acceptors. PSI consists of a core antenna complex that captures photons, and an electron transfer chain that converts photonic excitation into a charge separation. The eukaryotic PSI reaction center is composed of at least 11 subunits. It depends on P700 is a chlorophyll a/chlorophyll a' dimer, A0 is one or more chlorophyll a, A1 is one or both phylloquinones and FX is a shared 4Fe-4S iron-sulfur center. as a cofactor.

The protein resides in the plastid. The protein localises to the chloroplast thylakoid membrane. The enzyme catalyses reduced [plastocyanin] + hnu + oxidized [2Fe-2S]-[ferredoxin] = oxidized [plastocyanin] + reduced [2Fe-2S]-[ferredoxin]. PsaA and PsaB bind P700, the primary electron donor of photosystem I (PSI), as well as the electron acceptors A0, A1 and FX. PSI is a plastocyanin-ferredoxin oxidoreductase, converting photonic excitation into a charge separation, which transfers an electron from the donor P700 chlorophyll pair to the spectroscopically characterized acceptors A0, A1, FX, FA and FB in turn. Oxidized P700 is reduced on the lumenal side of the thylakoid membrane by plastocyanin. This chain is Photosystem I P700 chlorophyll a apoprotein A1, found in Helianthus annuus (Common sunflower).